Here is a 152-residue protein sequence, read N- to C-terminus: Large ribosomal subunit protein bL9 (152 aa).

Belongs to the bacterial ribosomal protein bL9 family.

In terms of biological role, binds to the 23S rRNA. This is Large ribosomal subunit protein bL9 from Mycobacterium sp. (strain JLS).